A 405-amino-acid chain; its full sequence is MENIMTLPKIKQVRAWFTGGAIAEKGAGGGDYHDQGANHWIDDHIATPMSKYRDYEQSRQSFGINVLGTLVVEVEAENGQTGFAVSTAGEMGCFIVEKHLNRFIEGKCVSDIKLIHDQMLNATLYYSGSGGLVMNTISCVDLALWDLFGKVVGLPVYKLLGGAVRDEIQFYATGARPDLAKEMGFIGGKMPTHWGPHDGDAGIRKDAAMVADMREKCGEDFWLMLDCWMSQDVNYATKLAHACAPYNLKWIEECLPPQQYEGYRELKHNAPAGMMVTSGEHHGTLQSFRTLSETGIDIMQPDVGWCGGLTTLVEIAAIAKSRGQLVVPHGSSVYSHHAVITFTNTPFSEFLMTSPDCSTMRPQFDPILLNEPVPVNGRIHKSVLDKPGFGVELNRDCNLKRPYSH.

Substrate-binding residues include histidine 33 and arginine 59. 3 residues coordinate Mg(2+): aspartate 226, glutamate 252, and glutamate 280. The active-site Proton acceptor is histidine 329. Position 349 (glutamate 349) interacts with substrate.

It belongs to the mandelate racemase/muconate lactonizing enzyme family. RhamD subfamily. As to quaternary structure, homooctamer; tetramer of dimers. The cofactor is Mg(2+).

The catalysed reaction is L-rhamnonate = 2-dehydro-3-deoxy-L-rhamnonate + H2O. Its function is as follows. Catalyzes the dehydration of L-rhamnonate to 2-keto-3-deoxy-L-rhamnonate (KDR). This Escherichia coli O45:K1 (strain S88 / ExPEC) protein is L-rhamnonate dehydratase.